A 1097-amino-acid chain; its full sequence is DNA-directed RNA polymerase subunit beta (1097 aa).

This sequence belongs to the RNA polymerase beta chain family. In terms of assembly, in plastids the minimal PEP RNA polymerase catalytic core is composed of four subunits: alpha, beta, beta', and beta''. When a (nuclear-encoded) sigma factor is associated with the core the holoenzyme is formed, which can initiate transcription.

Its subcellular location is the plastid. It localises to the chloroplast. The catalysed reaction is RNA(n) + a ribonucleoside 5'-triphosphate = RNA(n+1) + diphosphate. Functionally, DNA-dependent RNA polymerase catalyzes the transcription of DNA into RNA using the four ribonucleoside triphosphates as substrates. This Rhodomonas salina (Cryptomonas salina) protein is DNA-directed RNA polymerase subunit beta.